The following is a 268-amino-acid chain: MEIQFQQPNMQNQKAGISVTNKGGKFKGRNRNSNNTNKFVGVRQRPSGRWVAEIKDTTQKIRMWLGTFETAEEAARAYDEAACLLRGSNTRTNFITHVSLDSPLASRIRNLLNNRKGDKKQEDGAVASAPSNSKTTISNTSTITSNDDNKESTLSTCATRNTELFEDAYKPDLSNCKEVFESGSQSNISCGFGPFFDHFSFTQLLDMAKNDDITDASSLELSEFERMKVERQISASLYAINGVHEYMETVQESNEALWDLPPLCSLFC.

Polar residues predominate over residues methionine 1 to asparagine 21. Residues methionine 1–threonine 36 are disordered. Positions lysine 38–isoleucine 95 form a DNA-binding region, AP2/ERF. The tract at residues asparagine 114–leucine 154 is disordered. Positions serine 131–asparagine 146 are enriched in low complexity.

Belongs to the AP2/ERF transcription factor family. ERF subfamily. As to expression, expressed in roots, root hairs and leaves. Expressed in root epidermis and root hairs.

The protein resides in the nucleus. In terms of biological role, transcription factor involved in symbiotic nodule signaling in response to rhizobial Nod factors (NFs). Binds to the GCC-box (NF-responsive box) of ENOD11 promoter. Acts as a transcriptional activator of NF-responsive box-containing target gene promoters in root hairs. Functions as a transcriptional regulator required for root infection by symbiotic rhizobia, infection thread (IT) formation and maintenance, and nodule development. Necessary for NF-induced gene expression and spontaneous nodulation activated by CCAMK. Functions downstream of CCAMK to activate nodulation gene expression. Involved in early stages of root nodule development. Functions redundantly with ERN2. Is essential with ERN2 for the initiation of root hair infection, and nodule organogenesis and development. Required for accurate expression of the NF signaling genes ENOD11 and ENOD12. The chain is Ethylene-responsive transcription factor ERN1 from Medicago truncatula (Barrel medic).